The chain runs to 149 residues: 3-dehydroquinate dehydratase (149 aa).

The Proton acceptor role is filled by Y26. Positions 77, 83, and 90 each coordinate substrate. Catalysis depends on H103, which acts as the Proton donor. Substrate-binding positions include 104–105 (LS) and R114.

Belongs to the type-II 3-dehydroquinase family. In terms of assembly, homododecamer.

It carries out the reaction 3-dehydroquinate = 3-dehydroshikimate + H2O. Its pathway is metabolic intermediate biosynthesis; chorismate biosynthesis; chorismate from D-erythrose 4-phosphate and phosphoenolpyruvate: step 3/7. In terms of biological role, catalyzes a trans-dehydration via an enolate intermediate. The protein is 3-dehydroquinate dehydratase of Vibrio parahaemolyticus serotype O3:K6 (strain RIMD 2210633).